The primary structure comprises 154 residues: Fibroblast growth factor 2 (154 aa).

The propeptide occupies Met-1–Leu-9. Asn-35 provides a ligand contact to heparin. At Tyr-81 the chain carries Phosphotyrosine; by TEC. A Glycyl lysine isopeptide (Lys-Gly) (interchain with G-Cter in SUMO1) cross-link involves residue Lys-94. Residues Lys-127 to Lys-143 are heparin-binding.

It belongs to the heparin-binding growth factors family. As to quaternary structure, monomer. Homodimer. Interacts with FGFR1, FGFR2, FGFR3 and FGFR4. Affinity between fibroblast growth factors (FGFs) and their receptors is increased by heparan sulfate glycosaminoglycans that function as coreceptors. Interacts with CSPG4, FGFBP1 and TEC. Found in a complex with FGFBP1, FGF1 and FGF2. Interacts with FGFBP3. Interacts with integrin ITGAV:ITGB3; the interaction is required for FGF2 signaling. Interacts with SNORC (via the extracellular domain). Interacts with glypican GPC3. In terms of processing, phosphorylation at Tyr-81 regulates FGF2 unconventional secretion.

It is found in the secreted. The protein resides in the nucleus. Acts as a ligand for FGFR1, FGFR2, FGFR3 and FGFR4. Also acts as an integrin ligand which is required for FGF2 signaling. Binds to integrin ITGAV:ITGB3. Plays an important role in the regulation of cell survival, cell division, cell differentiation and cell migration. Functions as a potent mitogen in vitro. Can induce angiogenesis. Mediates phosphorylation of ERK1/2 and thereby promotes retinal lens fiber differentiation. The polypeptide is Fibroblast growth factor 2 (Fgf2) (Mus musculus (Mouse)).